A 283-amino-acid polypeptide reads, in one-letter code: Probable voltage-dependent anion-selective channel (283 aa).

This sequence belongs to the eukaryotic mitochondrial porin family.

Its subcellular location is the mitochondrion outer membrane. In terms of biological role, forms a channel through the cell membrane that allows diffusion of small hydrophilic molecules. Plays a role in maintaining mitochondrial morphology. The polypeptide is Probable voltage-dependent anion-selective channel (Caenorhabditis elegans).